The primary structure comprises 208 residues: Effector protein MavE (208 aa).

An NPxY eukaryotic motif motif is present at residues 77-80; that stretch reads NPRY. Residues 184-204 form a helical membrane-spanning segment; the sequence is VLFPFVAATVAVAATAASVLF.

In terms of assembly, homotrimer.

It localises to the secreted. It is found in the host vacuole. The protein resides in the host pathogen-containing vacuole. Its subcellular location is the host pathogen-containing vacuole membrane. Functionally, virulence effector that is indispensable for endoplasmic reticulum (ER)-mediated remodeling of the Legionella pneumophila-containing vacuole (LCV) and lysosomal evasion. Essential for intracellular replication in human monocyte-derived macrophages (hMDMs) and amoebae, as well as for intrapulmonary proliferation in mice. In Legionella pneumophila subsp. pneumophila (strain Philadelphia 1 / ATCC 33152 / DSM 7513), this protein is Effector protein MavE.